A 568-amino-acid chain; its full sequence is Urease subunit alpha (568 aa).

Residues 133–568 enclose the Urease domain; sequence GGLDIHIHFN…ELPLAQRYLL (436 aa). 3 residues coordinate Ni(2+): His138, His140, and Lys217. Lys217 is modified (N6-carboxylysine). A substrate-binding site is contributed by His219. His246 and His272 together coordinate Ni(2+). His320 acts as the Proton donor in catalysis. Asp360 serves as a coordination point for Ni(2+).

It belongs to the metallo-dependent hydrolases superfamily. Urease alpha subunit family. As to quaternary structure, heterotrimer of UreA (gamma), UreB (beta) and UreC (alpha) subunits. Three heterotrimers associate to form the active enzyme. Ni cation serves as cofactor. Post-translationally, carboxylation allows a single lysine to coordinate two nickel ions.

Its subcellular location is the cytoplasm. It catalyses the reaction urea + 2 H2O + H(+) = hydrogencarbonate + 2 NH4(+). It participates in nitrogen metabolism; urea degradation; CO(2) and NH(3) from urea (urease route): step 1/1. The protein is Urease subunit alpha of Haloarcula marismortui (strain ATCC 43049 / DSM 3752 / JCM 8966 / VKM B-1809) (Halobacterium marismortui).